The following is a 380-amino-acid chain: Chaperone protein DnaJ (380 aa).

A J domain is found at 5–72; that stretch reads DYYDTLGVPK…QKRAAYDQYG (68 aa). The disordered stretch occupies residues 21–47; sequence IKKAYRKLAMKHHPDRNQGDTSKVSED. A compositionally biased stretch (basic residues) spans 24-34; it reads AYRKLAMKHHP. Residues 35 to 47 show a composition bias toward basic and acidic residues; the sequence is DRNQGDTSKVSED. The CR-type zinc finger occupies 139–217; sequence GKEAQIRIPS…CHGVGKTKNN (79 aa). The Zn(2+) site is built by cysteine 152, cysteine 155, cysteine 169, cysteine 172, cysteine 191, cysteine 194, cysteine 205, and cysteine 208. 4 CXXCXGXG motif repeats span residues 152 to 159, 169 to 176, 191 to 198, and 205 to 212; these read CGICHGTG, CTTCHGHG, CPQCKGSG, and CVACHGVG.

Belongs to the DnaJ family. As to quaternary structure, homodimer. It depends on Zn(2+) as a cofactor.

The protein localises to the cytoplasm. Its function is as follows. Participates actively in the response to hyperosmotic and heat shock by preventing the aggregation of stress-denatured proteins and by disaggregating proteins, also in an autonomous, DnaK-independent fashion. Unfolded proteins bind initially to DnaJ; upon interaction with the DnaJ-bound protein, DnaK hydrolyzes its bound ATP, resulting in the formation of a stable complex. GrpE releases ADP from DnaK; ATP binding to DnaK triggers the release of the substrate protein, thus completing the reaction cycle. Several rounds of ATP-dependent interactions between DnaJ, DnaK and GrpE are required for fully efficient folding. Also involved, together with DnaK and GrpE, in the DNA replication of plasmids through activation of initiation proteins. This is Chaperone protein DnaJ from Polaromonas naphthalenivorans (strain CJ2).